Reading from the N-terminus, the 337-residue chain is Trace amine-associated receptor 5 (337 aa).

The Extracellular portion of the chain corresponds to 1–34 (MRAVFIQGAEEHPAAFCYQVNGSCPRTVHTLGIQ). Asn21 is a glycosylation site (N-linked (GlcNAc...) asparagine). 2 disulfides stabilise this stretch: Cys24/Cys188 and Cys99/Cys192. The chain crosses the membrane as a helical span at residues 35-55 (LVIYLACAAGMLIIVLGNLFV). Residues 56 to 70 (AFAVSYFKALHTPTN) lie on the Cytoplasmic side of the membrane. A helical membrane pass occupies residues 71 to 91 (FLLLSLALADMFLGLLVLPLS). The Extracellular segment spans residues 92-109 (TIRSVESCWFFGDFLCRL). A helical membrane pass occupies residues 110–130 (HTYLDPLFCLTSIFHLCFISI). Residues 131-154 (DRHCAICDPLLYPSKFTVRVALRY) are Cytoplasmic-facing. Residues 155–175 (ILAGWGVPAAYTSLFLYTDVV) form a helical membrane-spanning segment. The segment at 176–189 (ETRLSQWLEEMPCV) is extracellular Loop 2 (ECL2). Topologically, residues 176–204 (ETRLSQWLEEMPCVGSCQLLLNKFWGWLN) are extracellular. The helical transmembrane segment at 205 to 225 (FPLFFVPCLIMISLYVKIFVV) threads the bilayer. At 226–253 (ATRQAQQITTLSKNLAGAAKHDRKAAKT) the chain is on the cytoplasmic side. A helical membrane pass occupies residues 254–274 (LGIAVGIYLLCWLPFTIDTMV). Topologically, residues 275–284 (DSLLHFITPP) are extracellular. A helical membrane pass occupies residues 285–307 (LVFDIFIWFAYFNSACNPIIYVF). Residues 308–337 (SYQWFRKALKLTLSQKVFSPQTRTVDLYQE) lie on the Cytoplasmic side of the membrane.

Belongs to the G-protein coupled receptor 1 family.

It is found in the cell membrane. In terms of biological role, olfactory receptor specific for trimethylamine, a trace amine. Trimethylamine is a bacterial metabolite found in some animal odors. Trimethylamine-binding causes a conformation change that triggers signaling via G(s)-class of G alpha proteins (GNAL or GNAS). The protein is Trace amine-associated receptor 5 (TAAR5) of Pan troglodytes (Chimpanzee).